The chain runs to 274 residues: Energy-coupling factor transporter ATP-binding protein EcfA1 (274 aa).

Positions 10–241 (ASFQGVYFSY…AAELQKIRLD (232 aa)) constitute an ABC transporter domain. ATP is bound at residue 42-49 (GHNGSGKS).

This sequence belongs to the ABC transporter superfamily. Energy-coupling factor EcfA family. Forms a stable energy-coupling factor (ECF) transporter complex composed of 2 membrane-embedded substrate-binding proteins (S component), 2 ATP-binding proteins (A component) and 2 transmembrane proteins (T component).

The protein resides in the cell membrane. ATP-binding (A) component of a common energy-coupling factor (ECF) ABC-transporter complex. Unlike classic ABC transporters this ECF transporter provides the energy necessary to transport a number of different substrates. The sequence is that of Energy-coupling factor transporter ATP-binding protein EcfA1 from Mycoplasma pneumoniae (strain ATCC 29342 / M129 / Subtype 1) (Mycoplasmoides pneumoniae).